Here is a 379-residue protein sequence, read N- to C-terminus: Cytochrome b (379 aa).

Transmembrane regions (helical) follow at residues 33–53 (FGSL…FLAM), 77–98 (WLIR…YFHI), 113–133 (WNMG…GYVL), and 178–198 (FFAF…IHLL). Residues histidine 83 and histidine 97 each coordinate heme b. Residues histidine 182 and histidine 196 each contribute to the heme b site. Position 201 (histidine 201) interacts with a ubiquinone. The next 4 helical transmembrane spans lie at 226 to 246 (IKDI…VMFS), 288 to 308 (LGGV…PILH), 320 to 340 (LSQC…WIGG), and 347 to 367 (FITI…ILMP).

This sequence belongs to the cytochrome b family. As to quaternary structure, the cytochrome bc1 complex contains 11 subunits: 3 respiratory subunits (MT-CYB, CYC1 and UQCRFS1), 2 core proteins (UQCRC1 and UQCRC2) and 6 low-molecular weight proteins (UQCRH/QCR6, UQCRB/QCR7, UQCRQ/QCR8, UQCR10/QCR9, UQCR11/QCR10 and a cleavage product of UQCRFS1). This cytochrome bc1 complex then forms a dimer. Requires heme b as cofactor.

The protein localises to the mitochondrion inner membrane. In terms of biological role, component of the ubiquinol-cytochrome c reductase complex (complex III or cytochrome b-c1 complex) that is part of the mitochondrial respiratory chain. The b-c1 complex mediates electron transfer from ubiquinol to cytochrome c. Contributes to the generation of a proton gradient across the mitochondrial membrane that is then used for ATP synthesis. The polypeptide is Cytochrome b (MT-CYB) (Ctenomys leucodon (White-toothed tuco-tuco)).